Reading from the N-terminus, the 328-residue chain is Phosphatidylglycerol--prolipoprotein diacylglyceryl transferase (328 aa).

3 consecutive transmembrane segments (helical) span residues 15 to 35 (VIQG…ILIS), 57 to 77 (IFMF…STLV), and 106 to 126 (GMAI…TINT). R156 lines the a 1,2-diacyl-sn-glycero-3-phospho-(1'-sn-glycerol) pocket. A run of 2 helical transmembrane segments spans residues 242–262 (GFIF…IEYL) and 289–309 (ISMG…WIIV).

The protein belongs to the Lgt family.

The protein resides in the cell inner membrane. The enzyme catalyses L-cysteinyl-[prolipoprotein] + a 1,2-diacyl-sn-glycero-3-phospho-(1'-sn-glycerol) = an S-1,2-diacyl-sn-glyceryl-L-cysteinyl-[prolipoprotein] + sn-glycerol 1-phosphate + H(+). The protein operates within protein modification; lipoprotein biosynthesis (diacylglyceryl transfer). Its function is as follows. Catalyzes the transfer of the diacylglyceryl group from phosphatidylglycerol to the sulfhydryl group of the N-terminal cysteine of a prolipoprotein, the first step in the formation of mature lipoproteins. The protein is Phosphatidylglycerol--prolipoprotein diacylglyceryl transferase of Borreliella burgdorferi (strain ATCC 35210 / DSM 4680 / CIP 102532 / B31) (Borrelia burgdorferi).